We begin with the raw amino-acid sequence, 371 residues long: Loganic acid O-methyltransferase (371 aa).

Tyr31 contacts S-adenosyl-L-homocysteine. Loganate contacts are provided by Tyr37 and Gln38. The S-adenosyl-L-homocysteine site is built by Cys78, Asn83, Asp114, His115, Ser141, and Phe142. Residues His162 and Trp163 each coordinate loganate. Asn180 is a Mg(2+) binding site. Positions 241 and 245 each coordinate loganate. Mg(2+) is bound by residues Asp267, Phe269, and Asn270. The loganate site is built by Gln273 and Gln316.

The protein belongs to the methyltransferase superfamily. Type-7 methyltransferase family. As to quaternary structure, homodimer. The cofactor is Mg(2+). Expressed in leaves (especially in leaf epidermis), flowers, siliques and stems, and, at low levels, in hairy roots.

The enzyme catalyses loganate + S-adenosyl-L-methionine = loganin + S-adenosyl-L-homocysteine. It functions in the pathway alkaloid biosynthesis. Its activity is regulated as follows. Strongly repressed by loganin and slightly by S-adenosyl-L-homocysteine. In terms of biological role, component of the seco-iridoid and derivatives monoterpenoid indole alkaloids (MIAs, e.g. vinblastine and ajmalicine) biosynthesis pathway. Catalyzes the methylation of loganic acid (6S,7R) to produce loganin. Weak activity with secologanic acid as substrate. Inactive on deoxyloganic, dehydrologanic, epiloganic and loganetic acid. This Catharanthus roseus (Madagascar periwinkle) protein is Loganic acid O-methyltransferase.